Consider the following 231-residue polypeptide: MATNTMLCLLILSVVLALAFATNKKGDEEPENHSTGIFGKVGRVVTVALAMSSRLGGADATRGGGAVYGGNLKSNQLPNNNWMAPPPPMAIRSAKVYDSKHSPAEYLKKFAQDFRRKTGMHSQRHHEETTLEQEKRVAGAGPDPIHHEETTLEQEKRAVPAGPDPKHHEETTLEQEKRAVPAGPDPKHHEETTLEQEKRAVPAGPDPKHHEETTFEQEKRGAPAGPDPIHH.

The first 21 residues, 1-21 (MATNTMLCLLILSVVLALAFA), serve as a signal peptide directing secretion. A required for secretion from the host cytoplasm to the host apoplasm region spans residues 21 to 83 (ATNKKGDEEP…SNQLPNNNWM (63 aa)). Asn32 is a glycosylation site (N-linked (GlcNAc...) asparagine). The segment at 116 to 231 (RKTGMHSQRH…APAGPDPIHH (116 aa)) is disordered. 2 stretches are compositionally biased toward basic and acidic residues: residues 125 to 137 (HHEE…EKRV) and 144 to 221 (PIHH…EKRG). The A-1 repeat unit spans residues 127–135 (EETTLEQEK). The segment at 127 to 219 (EETTLEQEKR…HEETTFEQEK (93 aa)) is 5 X approximate repeat A. The stretch at 136 to 147 (RVAGAGPDPIHH) is one CLE-1 repeat. The interval 136–231 (RVAGAGPDPI…APAGPDPIHH (96 aa)) is 5 X approximate repeat CLE. The stretch at 148–156 (EETTLEQEK) is one A-2 repeat. Residues 157–168 (RAVPAGPDPKHH) form a CLE-2 repeat. One copy of the A-3 repeat lies at 169 to 177 (EETTLEQEK). One copy of the CLE-3 repeat lies at 178 to 189 (RAVPAGPDPKHH). Residues 190–198 (EETTLEQEK) form an A-4 repeat. A CLE-4 repeat occupies 199–210 (RAVPAGPDPKHH). An A-5 repeat occupies 211 to 219 (EETTFEQEK). Residues 220-231 (RGAPAGPDPIHH) form a CLE-5 repeat.

It belongs to the CLV3/ESR signal peptide family. As to expression, highly expressed exclusively within the dorsal esophageal gland cell during syncytium formation in host plants.

The protein resides in the secreted. It localises to the host cytoplasm. Its subcellular location is the host extracellular space. The protein localises to the extracellular space. It is found in the apoplast. Mimics host plant CLE extracellular signal peptides that regulate cell fate. May play a role in the differentiation or division of feeding cells (syncytia) induced in plant roots during infection. This chain is CLAVATA3/ESR (CLE)-related protein 4B-2 (CLE-4B-2), found in Globodera rostochiensis (Golden nematode worm).